We begin with the raw amino-acid sequence, 272 residues long: Undecaprenyl-diphosphatase (272 aa).

8 consecutive transmembrane segments (helical) span residues 4–24 (FEVI…FLPI), 43–63 (GGRV…CWLY), 86–106 (ISVL…VDFI), 109–129 (VLFS…IIFW), 145–165 (ITFK…IPGT), 186–206 (TEFS…FDLI), 222–242 (VGFV…VLFV), and 249–269 (VFAW…MFFN).

This sequence belongs to the UppP family.

The protein resides in the cell inner membrane. The enzyme catalyses di-trans,octa-cis-undecaprenyl diphosphate + H2O = di-trans,octa-cis-undecaprenyl phosphate + phosphate + H(+). Functionally, catalyzes the dephosphorylation of undecaprenyl diphosphate (UPP). Confers resistance to bacitracin. The sequence is that of Undecaprenyl-diphosphatase from Acinetobacter baumannii (strain SDF).